A 194-amino-acid polypeptide reads, in one-letter code: Xanthine phosphoribosyltransferase (194 aa).

Xanthine contacts are provided by L20 and N27. Residue 128-132 (ANGQA) coordinates 5-phospho-alpha-D-ribose 1-diphosphate. Position 156 (K156) interacts with xanthine.

The protein belongs to the purine/pyrimidine phosphoribosyltransferase family. Xpt subfamily. In terms of assembly, homodimer.

Its subcellular location is the cytoplasm. It catalyses the reaction XMP + diphosphate = xanthine + 5-phospho-alpha-D-ribose 1-diphosphate. The protein operates within purine metabolism; XMP biosynthesis via salvage pathway; XMP from xanthine: step 1/1. Converts the preformed base xanthine, a product of nucleic acid breakdown, to xanthosine 5'-monophosphate (XMP), so it can be reused for RNA or DNA synthesis. In Bacillus licheniformis (strain ATCC 14580 / DSM 13 / JCM 2505 / CCUG 7422 / NBRC 12200 / NCIMB 9375 / NCTC 10341 / NRRL NRS-1264 / Gibson 46), this protein is Xanthine phosphoribosyltransferase.